A 490-amino-acid polypeptide reads, in one-letter code: tRNA-guanine(15) transglycosylase (490 aa).

The Nucleophile role is filled by Asp-92. Substrate-binding residues include Asp-127 and Ala-195. Cys-278, Cys-280, and Cys-283 together coordinate Zn(2+).

It belongs to the archaeosine tRNA-ribosyltransferase family. It depends on Zn(2+) as a cofactor.

It carries out the reaction guanosine(15) in tRNA + 7-cyano-7-deazaguanine = 7-cyano-7-carbaguanosine(15) in tRNA + guanine. Its pathway is tRNA modification; archaeosine-tRNA biosynthesis. Its function is as follows. Exchanges the guanine residue with 7-cyano-7-deazaguanine (preQ0) at position 15 in the dihydrouridine loop (D-loop) of archaeal tRNAs. The protein is tRNA-guanine(15) transglycosylase of Haloarcula marismortui (strain ATCC 43049 / DSM 3752 / JCM 8966 / VKM B-1809) (Halobacterium marismortui).